The sequence spans 394 residues: S-adenosylmethionine synthase (394 aa).

Residue H15 participates in ATP binding. A Mg(2+)-binding site is contributed by D17. E43 is a K(+) binding site. Positions 56 and 99 each coordinate L-methionine. Residues 99-109 (QSPDIALGVNK) form a flexible loop region. ATP is bound by residues 173–175 (DGK), 239–240 (RF), D248, 254–255 (RK), A271, and K275. D248 provides a ligand contact to L-methionine. K279 serves as a coordination point for L-methionine.

It belongs to the AdoMet synthase family. As to quaternary structure, homotetramer; dimer of dimers. Requires Mg(2+) as cofactor. K(+) is required as a cofactor.

Its subcellular location is the cytoplasm. The catalysed reaction is L-methionine + ATP + H2O = S-adenosyl-L-methionine + phosphate + diphosphate. It functions in the pathway amino-acid biosynthesis; S-adenosyl-L-methionine biosynthesis; S-adenosyl-L-methionine from L-methionine: step 1/1. In terms of biological role, catalyzes the formation of S-adenosylmethionine (AdoMet) from methionine and ATP. The overall synthetic reaction is composed of two sequential steps, AdoMet formation and the subsequent tripolyphosphate hydrolysis which occurs prior to release of AdoMet from the enzyme. The sequence is that of S-adenosylmethionine synthase from Kosmotoga olearia (strain ATCC BAA-1733 / DSM 21960 / TBF 19.5.1).